The following is a 547-amino-acid chain: Chaperonin GroEL (547 aa).

ATP contacts are provided by residues 30 to 33 (TLGP), Lys51, 87 to 91 (DGTTT), Gly415, 479 to 481 (NAA), and Asp495.

It belongs to the chaperonin (HSP60) family. In terms of assembly, forms a cylinder of 14 subunits composed of two heptameric rings stacked back-to-back. Interacts with the co-chaperonin GroES.

It is found in the cytoplasm. The enzyme catalyses ATP + H2O + a folded polypeptide = ADP + phosphate + an unfolded polypeptide.. Its function is as follows. Together with its co-chaperonin GroES, plays an essential role in assisting protein folding. The GroEL-GroES system forms a nano-cage that allows encapsulation of the non-native substrate proteins and provides a physical environment optimized to promote and accelerate protein folding. In Polynucleobacter necessarius subsp. necessarius (strain STIR1), this protein is Chaperonin GroEL.